A 181-amino-acid polypeptide reads, in one-letter code: Neuroblastoma suppressor of tumorigenicity 1 (181 aa).

The signal sequence occupies residues 1–16 (MMLRVLVGAVLPAMLL). 5 disulfides stabilise this stretch: cysteine 35-cysteine 85, cysteine 49-cysteine 99, cysteine 59-cysteine 118, cysteine 63-cysteine 120, and cysteine 82-cysteine 123. The CTCK domain maps to 35-124 (CEAKNITQIV…ILHCSCQACG (90 aa)). A disordered region spans residues 132 to 181 (LSVYVQGEDGPGSQPGTHPHPHPHPHPGGQTPEPEDPPGAPHTEEEGAED).

This sequence belongs to the DAN family. As to quaternary structure, homodimer. In terms of tissue distribution, most abundant in normal lung and meningioma.

The protein resides in the secreted. Functionally, possible candidate as a tumor suppressor gene of neuroblastoma. May play an important role in preventing cells from entering the final stage (G1/S) of the transformation process. In Homo sapiens (Human), this protein is Neuroblastoma suppressor of tumorigenicity 1 (NBL1).